The sequence spans 489 residues: Otolin-1-A (489 aa).

The first 23 residues, Met1–Ala23, serve as a signal peptide directing secretion. Positions Lys27–Val57 are disordered. The N-linked (GlcNAc...) asparagine glycan is linked to Asn109. The interval Gly133–Lys335 is disordered. A compositionally biased stretch (gly residues) spans Gly142–Gly151. Collagen-like domains are found at residues Gly145–Lys204, Gly205–Lys255, and Gly264–Arg323. The span at Gln192 to Asp206 shows a compositional bias: basic and acidic residues. N-linked (GlcNAc...) asparagine glycosylation occurs at Asn225. A compositionally biased stretch (gly residues) spans Gly226–Gly235. Over residues Ile248–Asp257 the composition is skewed to basic and acidic residues. Asn287 carries N-linked (GlcNAc...) asparagine glycosylation. A compositionally biased stretch (low complexity) spans Asp290–Glu310. In terms of domain architecture, C1q spans Ala351–Lys488. Residues Asn391 and Asn396 are each glycosylated (N-linked (GlcNAc...) asparagine).

The protein belongs to the OTOL1 family. Homooligomer; disulfide-linked; probably forms homotrimers. Interacts with otomp.

It is found in the secreted. It localises to the extracellular space. The protein localises to the extracellular matrix. In terms of biological role, collagen-like protein, which provides an organic scaffold for otoliths onto the sensory epithelium of the inner ear. Acts as a scaffold for biomineralization by sequestering calcium. The polypeptide is Otolin-1-A (otol1a) (Danio rerio (Zebrafish)).